We begin with the raw amino-acid sequence, 266 residues long: Protein-ADP-ribose hydrolase (266 aa).

In terms of domain architecture, Macro spans 74-265 (TDLKDLKPIK…LYKEAFNRDA (192 aa)). 3 residues coordinate ADP-D-ribose: aspartate 93, isoleucine 94, and asparagine 107. Cysteine 113, histidine 118, and cysteine 120 together coordinate Zn(2+). Residues cysteine 120, isoleucine 121, aspartate 122, serine 212, threonine 213, glycine 214, and phenylalanine 216 each contribute to the ADP-D-ribose site.

Belongs to the MacroD-type family. Zn-Macro subfamily. The cofactor is Zn(2+).

It carries out the reaction 4-O-(ADP-D-ribosyl)-L-aspartyl-[protein] + H2O = L-aspartyl-[protein] + ADP-D-ribose + H(+). Its function is as follows. ADP-ribosylhydrolase that specifically reverses the SirTM-mediated mono-ADP-ribosylation at an asparatate residue of GcvH-L, by releasing ADP-ribose from the target protein. May play a role in the regulation of the response to host-induced oxidative stress. This is Protein-ADP-ribose hydrolase from Staphylococcus aureus (strain MSSA476).